The primary structure comprises 136 residues: S-protein homolog 25 (136 aa).

The N-terminal stretch at 1 to 20 (MNHSVFVILITITYFGLNQA) is a signal peptide. Residues Asn71 and Asn84 are each glycosylated (N-linked (GlcNAc...) asparagine).

Belongs to the plant self-incompatibility (S1) protein family.

It localises to the secreted. This Arabidopsis thaliana (Mouse-ear cress) protein is S-protein homolog 25.